A 35-amino-acid polypeptide reads, in one-letter code: VIGGAKCNINEHRSIVLLYSSRLFGHTLINKEWVL.

Positions 1 to 35 (VIGGAKCNINEHRSIVLLYSSRLFGHTLINKEWVL) constitute a Peptidase S1 domain.

Belongs to the peptidase S1 family. Snake venom subfamily. In terms of assembly, monomer. In terms of tissue distribution, expressed by the venom gland.

The protein localises to the secreted. Its activity is regulated as follows. Inhibited by diisopropylfluorophosphate (DFP). In terms of biological role, thrombin-like snake venom serine protease, that cleaves both alpha-chain (FGA) and beta-chain (FGB) of fibrinogen. Partially degrades factor X (F10), and release bradykinin from kininogen (KNG). Potently induces platelet aggregation. Shows a proteolytic activity towards protein constituents of the platelets cytoskeleton. Hydrolyzes actin, actin-binding protein, and P235. Shows a preferential cleavage at Arg-|-Xaa bonds. The protein is Thrombin-like enzyme cerastobin of Cerastes vipera (Sahara sand viper).